Here is a 77-residue protein sequence, read N- to C-terminus: Small ribosomal subunit protein bS20 (77 aa).

Belongs to the bacterial ribosomal protein bS20 family.

In terms of biological role, binds directly to 16S ribosomal RNA. This is Small ribosomal subunit protein bS20 from Streptococcus agalactiae serotype Ia (strain ATCC 27591 / A909 / CDC SS700).